The sequence spans 739 residues: Catalase-peroxidase (739 aa).

The tryptophyl-tyrosyl-methioninium (Trp-Tyr) (with M-253) cross-link spans 99–227; sequence WHSAGTYRMG…LAAVQMGLIY (129 aa). Catalysis depends on H100, which acts as the Proton acceptor. A cross-link (tryptophyl-tyrosyl-methioninium (Tyr-Met) (with W-99)) is located at residues 227–253; sequence YVNPEGPDGNPDPVASGRDVRETFARM. H268 provides a ligand contact to heme b.

The protein belongs to the peroxidase family. Peroxidase/catalase subfamily. As to quaternary structure, homodimer or homotetramer. Requires heme b as cofactor. Formation of the three residue Trp-Tyr-Met cross-link is important for the catalase, but not the peroxidase activity of the enzyme.

The catalysed reaction is H2O2 + AH2 = A + 2 H2O. It carries out the reaction 2 H2O2 = O2 + 2 H2O. Bifunctional enzyme with both catalase and broad-spectrum peroxidase activity. The polypeptide is Catalase-peroxidase (Syntrophotalea carbinolica (strain DSM 2380 / NBRC 103641 / GraBd1) (Pelobacter carbinolicus)).